Reading from the N-terminus, the 429-residue chain is Adenylosuccinate synthetase (429 aa).

Residues 12-18 (GDEGKGK) and 40-42 (GHT) each bind GTP. Aspartate 13 functions as the Proton acceptor in the catalytic mechanism. Residues aspartate 13 and glycine 40 each coordinate Mg(2+). IMP contacts are provided by residues 13 to 16 (DEGK), 38 to 41 (NAGH), threonine 128, arginine 142, glutamine 223, threonine 238, and arginine 302. The Proton donor role is filled by histidine 41. 298–304 (VNTGRKR) is a substrate binding site. Residues arginine 304, 330–332 (KLD), and 412–414 (GVG) each bind GTP.

It belongs to the adenylosuccinate synthetase family. Homodimer. The cofactor is Mg(2+).

The protein resides in the cytoplasm. The enzyme catalyses IMP + L-aspartate + GTP = N(6)-(1,2-dicarboxyethyl)-AMP + GDP + phosphate + 2 H(+). The protein operates within purine metabolism; AMP biosynthesis via de novo pathway; AMP from IMP: step 1/2. Plays an important role in the de novo pathway of purine nucleotide biosynthesis. Catalyzes the first committed step in the biosynthesis of AMP from IMP. This chain is Adenylosuccinate synthetase, found in Corynebacterium jeikeium (strain K411).